We begin with the raw amino-acid sequence, 496 residues long: Cytochrome P450 71D178 (496 aa).

Residues 1–21 (MDISISWVVIILLVLSYLILM) form a helical; Signal-anchor for type II membrane protein membrane-spanning segment. Residue cysteine 435 coordinates heme.

The protein belongs to the cytochrome P450 family. It depends on heme as a cofactor. As to expression, expressed in flowers, leaves and stems, especially in glandular trichomes.

The protein localises to the membrane. It catalyses the reaction (4S)-limonene + reduced [NADPH--hemoprotein reductase] + O2 = (1S,5R)-carveol + oxidized [NADPH--hemoprotein reductase] + H2O + H(+). The enzyme catalyses gamma-terpinene + 2 reduced [NADPH--hemoprotein reductase] + 2 O2 = carvacrol + 2 oxidized [NADPH--hemoprotein reductase] + 3 H2O + 2 H(+). It carries out the reaction gamma-terpinene + 2 reduced [NADPH--hemoprotein reductase] + 2 O2 = thymol + 2 oxidized [NADPH--hemoprotein reductase] + 3 H2O + 2 H(+). The catalysed reaction is (4R)-limonene + reduced [NADPH--hemoprotein reductase] + O2 = (1R,6S)-isopiperitenol + oxidized [NADPH--hemoprotein reductase] + H2O + H(+). It participates in secondary metabolite biosynthesis; terpenoid biosynthesis. In terms of biological role, involved in the biosynthesis of phenolic monoterpenes natural products thymol and carvacrol which have a broad range of biological activities acting as antimicrobial compounds, insecticides, antioxidants and pharmaceutical agents. Catalyzes the C2- and C3-hydroxylation of gamma-terpinene to produce carvacrol and thymol, respectively. Also mediates the C6-hydroxylation of (4S)-limonene to form carveol and the C3-hydroxylation of (4R)-limonene to generate (+)-trans-isopiperitenol. The protein is Cytochrome P450 71D178 of Origanum vulgare (Wild marjoram).